We begin with the raw amino-acid sequence, 71 residues long: Small ribosomal subunit protein bS21 (71 aa).

Residues 37 to 71 (HYEKPTAERKRKKAAAVKRHMKKLSRDNARRVKLY) are disordered. Basic residues predominate over residues 45–59 (RKRKKAAAVKRHMKK). The span at 60-71 (LSRDNARRVKLY) shows a compositional bias: basic and acidic residues.

The protein belongs to the bacterial ribosomal protein bS21 family.

The polypeptide is Small ribosomal subunit protein bS21 (Pseudoalteromonas translucida (strain TAC 125)).